Reading from the N-terminus, the 394-residue chain is MTIDTAAWPAGRVNSLGFAKPPHETRVVAAMSGGVDSSVVAAMLKAEGYDVIGITLQLYDHGAAIEKKGACCAGQDIHDARNVSDAIGIPHYVLDYESRFREQVMEDFADTYLSGSTPIPCIRCNQTVKFADLLATAKELGADCLATGHYIRRTDGPEGPELHRAQDASRDQSYFLFATTRAQLDFLRFPLGSLPKSEVRELAEKFALQVAAKPDSQDICFVPDGSYAKVVEKLRPGSGRGGEIVHLDGRVLGKHEGVIHYTIGQRRGLGVATGDPLFVVKIDAPARRVIVGPREALMTRGLLLEELNWLGQGSLEEAATHGARVLIRVRSTRPPVPGRLGYEDGVPAVFFDAPEEGVARGQAAVLYDLEGSTRILGGGFIARPLPADERVVAA.

ATP-binding positions include 30–37 (AMSGGVDS) and Leu-56. Catalysis depends on Cys-124, which acts as the Nucleophile. Cys-124 and Cys-220 are disulfide-bonded. Gly-148 is an ATP binding site. Residues 170-172 (RDQ) are interaction with tRNA. Cys-220 (cysteine persulfide intermediate) is an active-site residue.

Belongs to the MnmA/TRMU family.

The protein localises to the cytoplasm. It catalyses the reaction S-sulfanyl-L-cysteinyl-[protein] + uridine(34) in tRNA + AH2 + ATP = 2-thiouridine(34) in tRNA + L-cysteinyl-[protein] + A + AMP + diphosphate + H(+). Its function is as follows. Catalyzes the 2-thiolation of uridine at the wobble position (U34) of tRNA, leading to the formation of s(2)U34. This Hyphomonas neptunium (strain ATCC 15444) protein is tRNA-specific 2-thiouridylase MnmA.